A 424-amino-acid polypeptide reads, in one-letter code: UDP-N-acetylglucosamine 1-carboxyvinyltransferase (424 aa).

Position 22–23 (22–23) interacts with phosphoenolpyruvate; that stretch reads KN. Residue Arg93 participates in UDP-N-acetyl-alpha-D-glucosamine binding. Cys117 serves as the catalytic Proton donor. At Cys117 the chain carries 2-(S-cysteinyl)pyruvic acid O-phosphothioketal. UDP-N-acetyl-alpha-D-glucosamine is bound by residues 122–126, Asp307, and Val329; that span reads RPIDL.

It belongs to the EPSP synthase family. MurA subfamily.

It is found in the cytoplasm. It catalyses the reaction phosphoenolpyruvate + UDP-N-acetyl-alpha-D-glucosamine = UDP-N-acetyl-3-O-(1-carboxyvinyl)-alpha-D-glucosamine + phosphate. It functions in the pathway cell wall biogenesis; peptidoglycan biosynthesis. Its function is as follows. Cell wall formation. Adds enolpyruvyl to UDP-N-acetylglucosamine. This is UDP-N-acetylglucosamine 1-carboxyvinyltransferase from Chlorobium luteolum (strain DSM 273 / BCRC 81028 / 2530) (Pelodictyon luteolum).